Here is a 143-residue protein sequence, read N- to C-terminus: Ribosome maturation factor RimP (143 aa).

It belongs to the RimP family.

It localises to the cytoplasm. Required for maturation of 30S ribosomal subunits. The protein is Ribosome maturation factor RimP of Neisseria meningitidis serogroup C / serotype 2a (strain ATCC 700532 / DSM 15464 / FAM18).